The chain runs to 147 residues: Leghemoglobin (147 aa).

A Globin domain is found at 2 to 147 (GFTADQEALV…LASAIKKAMS (146 aa)). Nitrated tyrosine occurs at positions 25 and 30. Heme b is bound at residue S45. Phosphoserine is present on S45. Position 62 (H62) interacts with O2. Positions 65, 94, and 97 each coordinate heme b. Y135 is modified (nitrated tyrosine).

It belongs to the plant globin family. In terms of assembly, monomer. Post-translationally, nitrated in effective nodules and particularly in hypoxic conditions; this mechanism may play a protective role in the symbiosis by buffering toxic peroxynitrite NO(2)(-). Nitration level decrease during nodule senescence. Phosphorylation at Ser-45 disrupts the molecular environment of its porphyrin ring oxygen binding pocket, thus leading to a reduced oxygen consumption and to the delivery of oxygen O(2) to symbiosomes. As to expression, root nodules.

The protein localises to the cytoplasm. Its subcellular location is the cytosol. It is found in the nucleus. Leghemoglobin that reversibly binds oxygen O(2) through a pentacoordinated heme iron. In root nodules, facilitates the diffusion of oxygen to the bacteroids while preventing the bacterial nitrogenase from being inactivated by buffering dioxygen, nitric oxide and carbon monoxide, and promoting the formation of reactive oxygen species (ROS, e.g. H(2)O(2)). This role is essential for symbiotic nitrogen fixation (SNF). This chain is Leghemoglobin (LB3), found in Medicago sativa (Alfalfa).